Reading from the N-terminus, the 533-residue chain is (E)-beta-farnesene synthase (533 aa).

Residues Asp-286, Asp-290, Asn-430, Ser-434, and Glu-438 each contribute to the Mg(2+) site. The DDXXD motif signature appears at 286 to 290; it reads DDMMD.

This sequence belongs to the terpene synthase family. Requires Mg(2+) as cofactor. Co(2+) is required as a cofactor. The cofactor is Mn(2+).

The protein resides in the cytoplasm. The enzyme catalyses (2E,6E)-farnesyl diphosphate = (E)-beta-farnesene + diphosphate. The protein operates within secondary metabolite biosynthesis; terpenoid biosynthesis. Sesquiterpene cyclase catalyzing the production of sixfold more beta-farnesene than alpha-bergamotene from farnesyl diphosphate. Involved in indirect defense by producing volatile signals attracting natural enemies of herbivores. The polypeptide is (E)-beta-farnesene synthase (Zea perennis (Perennial teosinte)).